The chain runs to 214 residues: LexA repressor (214 aa).

A DNA-binding region (H-T-H motif) is located at residues 28–48 (IRDIQRELSISSTSVVAYNLR). Catalysis depends on for autocatalytic cleavage activity residues S133 and K172.

Belongs to the peptidase S24 family. Homodimer.

The catalysed reaction is Hydrolysis of Ala-|-Gly bond in repressor LexA.. Functionally, represses a number of genes involved in the response to DNA damage (SOS response), including recA and lexA. In the presence of single-stranded DNA, RecA interacts with LexA causing an autocatalytic cleavage which disrupts the DNA-binding part of LexA, leading to derepression of the SOS regulon and eventually DNA repair. The polypeptide is LexA repressor (Herpetosiphon aurantiacus (strain ATCC 23779 / DSM 785 / 114-95)).